Consider the following 299-residue polypeptide: Regucalcin (299 aa).

Position 18 (E18) interacts with a divalent metal cation. R101, N103, and E121 together coordinate substrate. K144 is modified (N6-succinyllysine). Residues N154 and D204 each coordinate a divalent metal cation. The active-site Proton donor/acceptor is D204. Residues K244 and K253 each carry the N6-succinyllysine modification.

The protein belongs to the SMP-30/CGR1 family. In terms of assembly, monomer. It depends on Zn(2+) as a cofactor. Requires Mn(2+) as cofactor. The cofactor is Ca(2+). Mg(2+) is required as a cofactor.

The protein localises to the cytoplasm. The enzyme catalyses D-glucono-1,5-lactone + H2O = D-gluconate + H(+). In terms of biological role, gluconolactonase with low activity towards other sugar lactones, including gulonolactone and galactonolactone. Can also hydrolyze diisopropyl phosphorofluoridate and phenylacetate (in vitro). Calcium-binding protein. Modulates Ca(2+) signaling, and Ca(2+)-dependent cellular processes and enzyme activities. The sequence is that of Regucalcin (RGN) from Pongo abelii (Sumatran orangutan).